A 165-amino-acid chain; its full sequence is SsrA-binding protein (165 aa).

A compositionally biased stretch (basic residues) spans 1-10 (MSKKGKKKSK). The interval 1 to 21 (MSKKGKKKSKNNSSVDGNRRL) is disordered.

The protein belongs to the SmpB family.

Its subcellular location is the cytoplasm. Functionally, required for rescue of stalled ribosomes mediated by trans-translation. Binds to transfer-messenger RNA (tmRNA), required for stable association of tmRNA with ribosomes. tmRNA and SmpB together mimic tRNA shape, replacing the anticodon stem-loop with SmpB. tmRNA is encoded by the ssrA gene; the 2 termini fold to resemble tRNA(Ala) and it encodes a 'tag peptide', a short internal open reading frame. During trans-translation Ala-aminoacylated tmRNA acts like a tRNA, entering the A-site of stalled ribosomes, displacing the stalled mRNA. The ribosome then switches to translate the ORF on the tmRNA; the nascent peptide is terminated with the 'tag peptide' encoded by the tmRNA and targeted for degradation. The ribosome is freed to recommence translation, which seems to be the essential function of trans-translation. The polypeptide is SsrA-binding protein (Prochlorococcus marinus (strain NATL1A)).